Reading from the N-terminus, the 335-residue chain is Glyceraldehyde-3-phosphate dehydrogenase (335 aa).

NAD(+) contacts are provided by residues 12 to 13 (RI), D34, R78, and S120. D-glyceraldehyde 3-phosphate is bound by residues 151-153 (SCT) and T182. C152 serves as the catalytic Nucleophile. N183 contacts NAD(+). D-glyceraldehyde 3-phosphate-binding positions include R197, 210 to 211 (TG), and R233. Position 315 (N315) interacts with NAD(+).

It belongs to the glyceraldehyde-3-phosphate dehydrogenase family. Homotetramer.

The protein localises to the cytoplasm. It catalyses the reaction D-glyceraldehyde 3-phosphate + phosphate + NAD(+) = (2R)-3-phospho-glyceroyl phosphate + NADH + H(+). It participates in carbohydrate degradation; glycolysis; pyruvate from D-glyceraldehyde 3-phosphate: step 1/5. In terms of biological role, catalyzes the oxidative phosphorylation of glyceraldehyde 3-phosphate (G3P) to 1,3-bisphosphoglycerate (BPG) using the cofactor NAD. The first reaction step involves the formation of a hemiacetal intermediate between G3P and a cysteine residue, and this hemiacetal intermediate is then oxidized to a thioester, with concomitant reduction of NAD to NADH. The reduced NADH is then exchanged with the second NAD, and the thioester is attacked by a nucleophilic inorganic phosphate to produce BPG. The chain is Glyceraldehyde-3-phosphate dehydrogenase (gap) from Geobacillus stearothermophilus (Bacillus stearothermophilus).